The sequence spans 869 residues: AP-3 complex subunit delta (869 aa).

Position 2 is an N-acetylserine (S2). HEAT repeat units follow at residues 33–70 (NFISRAVEEIRREIKATDLSTKSTALHKLSYLAALHGV), 107–142 (SVMLLITNQVRKDLNSANEYEVSLALECLSRIGTHD), 143–179 (LARDLTPEVFTLLGSSKSFVKKKAIGVVLRVFEKYHD), 180–216 (AVKVCFKRLVENLETSDPQILSAVVGVFCELATKDPQ), 218–254 (CLPLAPEFYKVLVDSRNNWVLIKVLKIFAKLALIEPR), 292–329 (AAVKLAVAKIREFLVEDDPNLKYLGLNALSIVAPKHLW), and 330–366 (AVLENKEVVVKAMSDEDPNVKLEALHLLMAMVNEDNV). The interval 738–869 (ISQDSFNPKR…EQVIIPDFLL (132 aa)) is disordered. The span at 769–780 (ITPQAKTNIQTA) shows a compositional bias: polar residues. Positions 815 to 830 (QEKEESSRIENHQNSE) are enriched in basic and acidic residues. The segment covering 831–850 (KKKKKKKKKKGEGSSKHKSR) has biased composition (basic residues).

It belongs to the adaptor complexes large subunit family. As to quaternary structure, adaptor protein complex 3 (AP-3) is a heterotetramer composed of two large adaptins (delta-type subunit and beta-type subunit), a medium adaptin (mu-type subunit) and a small adaptin (sigma-type subunit). Binds to EPSIN2.

The protein resides in the cytoplasm. Its subcellular location is the golgi apparatus membrane. Functionally, part of the AP-3 complex, an adaptor-related complex which seems to be clathrin-associated. The complex is associated with the Golgi region as well as more peripheral structures. It facilitates the budding of vesicles from the Golgi membrane and may be directly involved in trafficking to the vacuole. It also function in maintaining the identity of lytic vacuoles and in regulating the transition between storage and lytic vacuoles. The sequence is that of AP-3 complex subunit delta (DELTA-ADR) from Arabidopsis thaliana (Mouse-ear cress).